Here is a 317-residue protein sequence, read N- to C-terminus: Iron-uptake system-binding protein (317 aa).

The signal sequence occupies residues 1-19 (MKKISLTLLILLLALTAAA). A lipid anchor (N-palmitoyl cysteine) is attached at cysteine 20. Cysteine 20 is lipidated: S-diacylglycerol cysteine. The Fe/B12 periplasmic-binding domain maps to 57–317 (IAITGSVESM…KAAAEKLTQN (261 aa)).

The protein belongs to the bacterial solute-binding protein 8 family. As to quaternary structure, the complex is composed of one ATP-binding protein (YusV), two transmembrane proteins (FeuB and FeuC) and a solute-binding protein (FeuA).

It localises to the cell membrane. The protein resides in the cytoplasm. Its subcellular location is the membrane raft. Its function is as follows. Involved in the uptake of iron. Part of the ABC transporter complex FeuABC/YusV involved in import of the catecholate siderophores bacillibactin and enterobactin. The polypeptide is Iron-uptake system-binding protein (feuA) (Bacillus subtilis (strain 168)).